Consider the following 425-residue polypeptide: Serine--tRNA ligase (425 aa).

L-serine is bound at residue 230-232 (TAE). 261-263 (RSE) is an ATP binding site. E284 serves as a coordination point for L-serine. 348–351 (EISS) contacts ATP. S384 is a binding site for L-serine.

It belongs to the class-II aminoacyl-tRNA synthetase family. Type-1 seryl-tRNA synthetase subfamily. As to quaternary structure, homodimer. The tRNA molecule binds across the dimer.

It is found in the cytoplasm. The catalysed reaction is tRNA(Ser) + L-serine + ATP = L-seryl-tRNA(Ser) + AMP + diphosphate + H(+). The enzyme catalyses tRNA(Sec) + L-serine + ATP = L-seryl-tRNA(Sec) + AMP + diphosphate + H(+). Its pathway is aminoacyl-tRNA biosynthesis; selenocysteinyl-tRNA(Sec) biosynthesis; L-seryl-tRNA(Sec) from L-serine and tRNA(Sec): step 1/1. In terms of biological role, catalyzes the attachment of serine to tRNA(Ser). Is also able to aminoacylate tRNA(Sec) with serine, to form the misacylated tRNA L-seryl-tRNA(Sec), which will be further converted into selenocysteinyl-tRNA(Sec). In Streptococcus pyogenes serotype M1, this protein is Serine--tRNA ligase.